The chain runs to 421 residues: 5-hydroxytryptamine receptor 1A (421 aa).

Residues 1–38 (MDMFSLGQGNNTTTSLEPFGTGGNDTGLSNVTFSYQVI) are Extracellular-facing. Asn-10, Asn-11, Asn-24, and Asn-30 each carry an N-linked (GlcNAc...) asparagine glycan. The chain crosses the membrane as a helical span at residues 39-59 (TSLLLGTLIFCAVLGNACVVA). The Cytoplasmic segment spans residues 60 to 73 (AIALERSLQNVANY). The chain crosses the membrane as a helical span at residues 74–98 (LIGSLAVTDLMVSVLVLPMAALYQV). Topologically, residues 99 to 107 (LNKWTLGQV) are extracellular. Residues 108 to 132 (TCDLFIALDVLCCTSSILHLCAIAL) traverse the membrane as a helical segment. Cysteines 109 and 187 form a disulfide. Residues Asp-116 and Cys-120 each contribute to the serotonin site. A DRY motif; important for ligand-induced conformation changes motif is present at residues 133–135 (DRY). Residues 133–152 (DRYWAITDPIDYVNKRTPRR) are Cytoplasmic-facing. The helical transmembrane segment at 153–174 (AAALISLTWLIGFLISIPPMLG) threads the bilayer. Over 175-193 (WRTPEDRSNPNECTISKDH) the chain is Extracellular. The helical transmembrane segment at 194–216 (GYTIYSTFGAFYIPLLLMLVLYG) threads the bilayer. Topologically, residues 217–346 (RIFRAARFRI…LARERKTVKT (130 aa)) are cytoplasmic. Residues 237 to 268 (GAGTSFGTSSAPPPKKSLNGQPGSGDCRRSAE) are disordered. Residues Thr-314, Lys-345, Thr-346, and Gly-352 each contribute to the 1D-myo-inositol 4-phosphate site. Residues 347–370 (LGIIMGTFILCWLPFFIVALVLPF) form a helical membrane-spanning segment. The Extracellular portion of the chain corresponds to 371–378 (CESSCHMP). Residues 379–403 (ELLGAIINWLGYSNSLLNPVIYAYF) traverse the membrane as a helical segment. The NPxxY motif; important for ligand-induced conformation changes and signaling motif lies at 396–400 (NPVIY). Residues Phe-403, Asn-404, and Lys-405 each coordinate 1D-myo-inositol 4-phosphate. Over 404-421 (NKDFQNAFKKIIKCKFCR) the chain is Cytoplasmic.

This sequence belongs to the G-protein coupled receptor 1 family. 5-hydroxytryptamine receptor subfamily. HTR1A sub-subfamily. In terms of assembly, heterodimer; heterodimerizes with GPER1. Interacts with YIF1B. Interacts with GPR39 and GALR1. Most abundantly expressed in midbrain, in dorsal raphe and hippocampus. Detected at lower levels in amygdala and brain cortex.

The protein resides in the cell membrane. It localises to the cell projection. It is found in the dendrite. With respect to regulation, G-protein coupled receptor activity is regulated by lipids: phosphatidylinositol 4-phosphate increases HTR1A-mediated activity. Plays a role in the regulation of dopamine and 5-hydroxytryptamine levels in the brain, and thereby affects neural activity, mood and behavior. Plays a role in the response to anxiogenic stimuli. In terms of biological role, G-protein coupled receptor for 5-hydroxytryptamine (serotonin). Also functions as a receptor for various drugs and psychoactive substances. Ligand binding causes a conformation change that triggers signaling via guanine nucleotide-binding proteins (G proteins) and modulates the activity of downstream effectors, such as adenylate cyclase. HTR1A is coupled to G(i)/G(o) G alpha proteins and mediates inhibitory neurotransmission: signaling inhibits adenylate cyclase activity and activates a phosphatidylinositol-calcium second messenger system that regulates the release of Ca(2+) ions from intracellular stores. Beta-arrestin family members regulate signaling by mediating both receptor desensitization and resensitization processes. In Mus musculus (Mouse), this protein is 5-hydroxytryptamine receptor 1A (Htr1a).